Here is a 191-residue protein sequence, read N- to C-terminus: Protein Ves (191 aa).

This sequence belongs to the Ves family.

This chain is Protein Ves, found in Shigella boydii serotype 18 (strain CDC 3083-94 / BS512).